We begin with the raw amino-acid sequence, 48 residues long: Small, acid-soluble spore protein P (48 aa).

Positions 1 to 12 are enriched in basic and acidic residues; it reads MTNKNDGKDMRK. The tract at residues 1 to 48 is disordered; that stretch reads MTNKNDGKDMRKNAPKGAQPGQPEPLSGSKKVKNRNHTRQKHNSSHDM. Positions 30–48 are enriched in basic residues; sequence KKVKNRNHTRQKHNSSHDM.

The protein belongs to the SspP family.

The protein resides in the spore core. This is Small, acid-soluble spore protein P from Bacillus licheniformis (strain ATCC 14580 / DSM 13 / JCM 2505 / CCUG 7422 / NBRC 12200 / NCIMB 9375 / NCTC 10341 / NRRL NRS-1264 / Gibson 46).